We begin with the raw amino-acid sequence, 915 residues long: WD repeat-containing protein 44 (915 aa).

The span at 1–14 (MASESDTEEFYDAP) shows a compositional bias: acidic residues. The disordered stretch occupies residues 1–24 (MASESDTEEFYDAPEDVHLGTGYP). At A2 the chain carries N-acetylalanine. The tract at residues 2-173 (ASESDTEEFY…SSGEQLDASG (172 aa)) is binding activity. S3 carries the phosphoserine modification. Positions 9 to 15 (EFYDAPE) match the FFAT-like motif motif. At Y11 the chain carries Phosphotyrosine. S27, S50, S66, S71, S81, and S126 each carry phosphoserine. Disordered stretches follow at residues 79-102 (DDSLDSKGKGLSDEATAGPSVAGT), 117-174 (LQQD…ASGL), and 208-282 (VEEV…PKEN). The stretch at 114–139 (EHELQQDSEKAESQNVAEESELETQK) forms a coiled coil. The segment covering 146–155 (TCEKSEKTVD) has biased composition (basic and acidic residues). Phosphothreonine occurs at positions 161 and 221. An important for interaction with ARHGAP26 AND ARHGAP10 region spans residues 213 to 259 (PAKPPRHLTPEPDIVASTKKPVPARPPPPTNFPPPRPPPPSRPAPPP). Over residues 235–258 (PARPPPPTNFPPPRPPPPSRPAPP) the composition is skewed to pro residues. The residue at position 264 (S264) is a Phosphoserine. The span at 264–280 (SELEFEALKTPDLDVPK) shows a compositional bias: basic and acidic residues. A Phosphothreonine modification is found at T273. Residues 336 to 349 (VMGPQRPRSNSGRE) are important for interaction with RAB11A. Phosphoserine occurs at positions 344 and 346. A phosphothreonine mark is found at T351 and T403. Disordered stretches follow at residues 399 to 425 (SNDATQSDDEEKLQSQQTDTDGGRLKQ) and 461 to 481 (DEVFHTDQDDPSSSDDEGMPY). Phosphoserine is present on residues S405, S472, S473, and S474. Over residues 469–478 (DDPSSSDDEG) the composition is skewed to acidic residues. Y481 is subject to Phosphotyrosine. A WD 1 repeat occupies 511 to 550 (EHMGAVWTMKFSHCGRLLASAGQDNIVRIWALKNAFDYFN). Positions 559–593 (EGRVSPSPSQESLSSSKSDTDMGVCSGTDEDPDDK) are disordered. Phosphoserine occurs at positions 563 and 567. Over residues 563–575 (SPSPSQESLSSSK) the composition is skewed to low complexity. WD repeat units lie at residues 607-645 (GHTADLLDLSWSKNYFLLSSSMDKTVRLWHISRRECLCC), 647-687 (QHID…VALW), 692-731 (GQTKLITAANFCQNGKYAVIGTYDGRCIFYDTEHLKYHTQ), 742-781 (KVGRKITGIEPLPGENKILVTSNDSRIRLYDLRDLSLSMK), 786-825 (VNSSSQIKASFSHDFTYLVSGSEDKYVYIWSTYHDLSKFT), 840-880 (AHNA…EVLD), and 882-915 (TSTGIVKTDNTEVLLSADFTGAIKVFINKRKTVS).

As to quaternary structure, interacts with the GTP-bound form of RAB11 when membrane-associated. Interacts with GRAF1/ARHGAP26 or GRAF2/ARHGAP10; the interaction connects the endoplasmic reticulum (ER) with the endosomal tubule. Interacts (via FFAT-like motif) with VAPA (via MSP domain) or VAPB (via MSP domain); the interaction connects the ER with the endosomal tubule. Does not bind to other Rab and Rho small G proteins. Post-translationally, phosphorylated by ATK1; the phosphorylation stabilizes its interaction with RAB11A and RAB11B.

It localises to the cytoplasm. The protein localises to the cytosol. Its subcellular location is the perinuclear region. The protein resides in the endosome membrane. It is found in the golgi apparatus. It localises to the trans-Golgi network. Its function is as follows. Downstream effector for Rab11 which regulates Rab11 intracellular membrane trafficking functions such as endocytic recycling, intracellular ciliogenesis and protein export. ATK1-mediated phosphorylation of WDR44 induces binding to Rab11 which activates endocytic recycling of transferrin receptor back to the plasma membrane. When bound to Rab11, prevents the formation of the ciliogenic Rab11-Rabin8/RAB3IP-RAB11FIP3 complex, therefore inhibiting preciliary trafficking and ciliogenesis. Participates in neo-synthesized protein export by connecting the endoplasmic reticulum (ER) with the endosomal tubule via direct interactions with the integral ER proteins VAPA or VAPB and the endosomal protein GRAFs (GRAF1/ARHGAP26 or GRAF2/ARHGAP10), which facilitates the transfer of proteins such as E-cadherin, MPP14 and CFTR into a Rab8-Rab10-Rab11-dependent export route. This is WD repeat-containing protein 44 from Mus musculus (Mouse).